Here is a 319-residue protein sequence, read N- to C-terminus: HTH-type transcriptional regulator YidZ (319 aa).

An HTH lysR-type domain is found at Leu-8–Thr-65. Positions Val-25–Ala-44 form a DNA-binding region, H-T-H motif.

This sequence belongs to the LysR transcriptional regulatory family.

Its function is as follows. Involved in anaerobic NO protection. This chain is HTH-type transcriptional regulator YidZ, found in Escherichia coli (strain K12 / MC4100 / BW2952).